A 785-amino-acid chain; its full sequence is Conserved oligomeric Golgi complex subunit 4 (785 aa).

The segment at 1–24 (MADFDSPPKLSGVQPPSEGVGGGR) is disordered. Position 2 is an N-acetylalanine (A2). The segment at 2–84 (ADFDSPPKLS…VTLHRMGPNL (83 aa)) is interaction with SCFD1. S6 carries the post-translational modification Phosphoserine. The tract at residues 85–153 (QLIEGDAKQL…TALRNEDYEQ (69 aa)) is interaction with STX5. Positions 618–740 (PQVQPWINSF…SQMATILNLE (123 aa)) are d domain. The segment at 741–785 (RVTEILDYWGPNSGPLTWRLTPAEVRQVLALRIDFRSEDIKRLRL) is e domain; essential for proper cell surface glycosylation.

This sequence belongs to the COG4 family. Monomer. Component of the conserved oligomeric Golgi (COG) complex which is composed of eight different subunits and is required for normal Golgi morphology and localization. Mediates interaction of SCFD1 with the COG complex. Interacts with STX5.

The protein localises to the cytoplasm. It localises to the cytosol. The protein resides in the golgi apparatus membrane. Required for normal Golgi function. Plays a role in SNARE-pin assembly and Golgi-to-ER retrograde transport via its interaction with SCFD1. This chain is Conserved oligomeric Golgi complex subunit 4 (COG4), found in Pongo abelii (Sumatran orangutan).